A 338-amino-acid polypeptide reads, in one-letter code: UDP-glucose 4-epimerase (338 aa).

Residues 16-17 (YI), 37-42 (IDINHT), 59-60 (NL), 81-85 (FAAKT), threonine 126, tyrosine 153, lysine 157, and phenylalanine 181 contribute to the NAD(+) site. Substrate-binding residues include threonine 126 and tyrosine 153. The active-site Proton acceptor is tyrosine 153. Substrate-binding positions include asparagine 182, 198-199 (TL), 215-217 (FLY), arginine 230, and 294-297 (RAGD).

This sequence belongs to the NAD(P)-dependent epimerase/dehydratase family. In terms of assembly, homodimer. Requires NAD(+) as cofactor.

The catalysed reaction is UDP-alpha-D-glucose = UDP-alpha-D-galactose. Its pathway is carbohydrate metabolism; galactose metabolism. Involved in the metabolism of galactose. Catalyzes the conversion of UDP-galactose (UDP-Gal) to UDP-glucose (UDP-Glc) through a mechanism involving the transient reduction of NAD. The sequence is that of UDP-glucose 4-epimerase (galE) from Mycoplasma pneumoniae (strain ATCC 29342 / M129 / Subtype 1) (Mycoplasmoides pneumoniae).